Reading from the N-terminus, the 431-residue chain is Serine--tRNA ligase (431 aa).

238–240 (TSE) contributes to the L-serine binding site. 269–271 (RSE) lines the ATP pocket. Glutamate 292 serves as a coordination point for L-serine. 356–359 (EISS) lines the ATP pocket. Residue serine 391 participates in L-serine binding.

Belongs to the class-II aminoacyl-tRNA synthetase family. Type-1 seryl-tRNA synthetase subfamily. As to quaternary structure, homodimer. The tRNA molecule binds across the dimer.

Its subcellular location is the cytoplasm. The enzyme catalyses tRNA(Ser) + L-serine + ATP = L-seryl-tRNA(Ser) + AMP + diphosphate + H(+). The catalysed reaction is tRNA(Sec) + L-serine + ATP = L-seryl-tRNA(Sec) + AMP + diphosphate + H(+). The protein operates within aminoacyl-tRNA biosynthesis; selenocysteinyl-tRNA(Sec) biosynthesis; L-seryl-tRNA(Sec) from L-serine and tRNA(Sec): step 1/1. Functionally, catalyzes the attachment of serine to tRNA(Ser). Is also able to aminoacylate tRNA(Sec) with serine, to form the misacylated tRNA L-seryl-tRNA(Sec), which will be further converted into selenocysteinyl-tRNA(Sec). The sequence is that of Serine--tRNA ligase from Leptothrix cholodnii (strain ATCC 51168 / LMG 8142 / SP-6) (Leptothrix discophora (strain SP-6)).